Reading from the N-terminus, the 536-residue chain is SNW domain-containing protein 1 (536 aa).

The tract at residues 1 to 44 (MALTSFLPAPTQLSQDQLEAEERARSQRSLQTSLVSSRREPPPY) is disordered. A2 is subject to N-acetylalanine. S14 carries the phosphoserine modification. Residues 27-36 (QRSLQTSLVS) show a composition bias toward polar residues. The segment at 59–79 (GDGGAFPEIHVAQYPLDMGRK) is interaction with PPIL1. Glycyl lysine isopeptide (Lys-Gly) (interchain with G-Cter in SUMO2) cross-links involve residues K81, K97, K115, K122, K141, K158, and K170. Residues 174–339 (AQYIRYTPSQ…KARERRAGIK (166 aa)) form an SNW region. Residues S182 and S190 each carry the phosphoserine modification. K193 is covalently cross-linked (Glycyl lysine isopeptide (Lys-Gly) (interchain with G-Cter in SUMO2)). The interval 212-233 (FKINKKIPRGPPSPPAPVMHSP) is disordered. Phosphoserine is present on residues S224, S232, and S234. Glycyl lysine isopeptide (Lys-Gly) (interchain with G-Cter in SUMO2) cross-links involve residues K240, K258, K286, K339, K344, K416, and K441. Residues 311-386 (KMAQKEKEKH…RSKLQRNENR (76 aa)) are disordered. S446 carries the post-translational modification Phosphoserine. K452 is covalently cross-linked (Glycyl lysine isopeptide (Lys-Gly) (interchain with G-Cter in SUMO2)). Composition is skewed to basic and acidic residues over residues 467–489 (IKTN…RGRE) and 503–530 (KFLE…EHEG). Positions 467–536 (IKTNRFVPDK…EHEGKKRRKE (70 aa)) are disordered. Phosphoserine is present on residues S479 and S481. K509 is covalently cross-linked (Glycyl lysine isopeptide (Lys-Gly) (interchain with G-Cter in SUMO2)).

It belongs to the SNW family. Identified in the spliceosome C complex. Associates with U4/U6-U5 tri-small nuclear ribonucleoproteins (U4/U6-U5 tri-snRNPs). Component of the minor spliceosome, which splices U12-type introns. Interacts with SKI, SMAD2,SMAD3, RBPJ, RB1, PABPN1, MAGEA1, SIRT1, FOXN3, U2AF2, PPIL1, DAXX and ATP1B4. Interacts with VDR and RXRA; preferentially associates with VDR:RXRA heterodimers. Interacts with NCOR2. Interacts with MAML1. Interacts with NOTCH1 NICD; the interaction involves multimerized NOTCH1 NICD. Forms a complex with NOTCH1 NICD and MAML1; the association is dissociated by RBPJ. Associates with positive transcription elongation factor b (P-TEFb). Component of the SNARP complex which consists at least of SNIP1, SNW1, THRAP3, BCLAF1 and PNN.

Its subcellular location is the nucleus. Involved in pre-mRNA splicing as component of the spliceosome. As a component of the minor spliceosome, involved in the splicing of U12-type introns in pre-mRNAs. Required in the specific splicing of CDKN1A pre-mRNA; the function probably involves the recruitment of U2AF2 to the mRNA. May recruit PPIL1 to the spliceosome. May be involved in cyclin-D1/CCND1 mRNA stability through the SNARP complex which associates with both the 3'end of the CCND1 gene and its mRNA. Involved in transcriptional regulation. Modulates TGF-beta-mediated transcription via association with SMAD proteins, MYOD1-mediated transcription via association with PABPN1, RB1-mediated transcriptional repression, and retinoid-X receptor (RXR)- and vitamin D receptor (VDR)-dependent gene transcription in a cell line-specific manner probably involving coactivators NCOA1 and GRIP1. Is involved in NOTCH1-mediated transcriptional activation. Binds to multimerized forms of Notch intracellular domain (NICD) and is proposed to recruit transcriptional coactivators such as MAML1 to form an intermediate preactivation complex which associates with DNA-bound CBF-1/RBPJ to form a transcriptional activation complex by releasing SNW1 and redundant NOTCH1 NICD. The chain is SNW domain-containing protein 1 (Snw1) from Mus musculus (Mouse).